A 954-amino-acid polypeptide reads, in one-letter code: Isoleucine--tRNA ligase (954 aa).

Positions 58 to 68 (PYANGDIHIGH) match the 'HIGH' region motif. E572 serves as a coordination point for L-isoleucyl-5'-AMP. The 'KMSKS' region signature appears at 613–617 (KMSKS). An ATP-binding site is contributed by K616. Residues C917, C920, C937, and C940 each contribute to the Zn(2+) site.

It belongs to the class-I aminoacyl-tRNA synthetase family. IleS type 1 subfamily. As to quaternary structure, monomer. It depends on Zn(2+) as a cofactor.

The protein localises to the cytoplasm. The enzyme catalyses tRNA(Ile) + L-isoleucine + ATP = L-isoleucyl-tRNA(Ile) + AMP + diphosphate. Its function is as follows. Catalyzes the attachment of isoleucine to tRNA(Ile). As IleRS can inadvertently accommodate and process structurally similar amino acids such as valine, to avoid such errors it has two additional distinct tRNA(Ile)-dependent editing activities. One activity is designated as 'pretransfer' editing and involves the hydrolysis of activated Val-AMP. The other activity is designated 'posttransfer' editing and involves deacylation of mischarged Val-tRNA(Ile). The chain is Isoleucine--tRNA ligase from Photobacterium profundum (strain SS9).